Reading from the N-terminus, the 452-residue chain is MDNLSERFNVLQENLMDIYESGQEDIETQIKHWQLLRQEQVLFYYARKNGVMRVGYQPVPPLATSEAKAKDAIGMVLLLQSLQKSPYGKEPWTLTQTSLETVRSPPANCFKKGPQNIEVMFDNDPENLMSYTVWSFIYYQNLDDTWNKVEGRVDYHGAYYMEGSLKVYYIQFEVDAARFGKTGRWEVHVNEDTIFAPVTSSSPAAGEGTDASPINAASRSSPARGLSATSVSTRTTQRTSPRRYRRKASSPTATTTRHKRQDIRRSRSTSRGRQAISRGGERRQRRRERSYSRDSSRSPNRGRGGSSGGPTTRSQSRSLSRSRSRSRSRSRGSSAGGGVAPEQVGKSVRSVGRNPGGRLTRLLEEARDPPVILLRGEANKLKCFRYRAKKRYGSLVKYYSTTWSWVGANTNDRIGRSRMLLAFNTYDERELFIQKMKLPPGVDWSLGHLDDL.

The transactivation domain stretch occupies residues 1–201 (MDNLSERFNV…DTIFAPVTSS (201 aa)). Residues 198–356 (VTSSSPAAGE…SVRSVGRNPG (159 aa)) form a disordered region. The segment covering 227-239 (SATSVSTRTTQRT) has biased composition (low complexity). Over residues 256–270 (TRHKRQDIRRSRSTS) the composition is skewed to basic residues. Over residues 309–319 (GPTTRSQSRSL) the composition is skewed to low complexity. The segment covering 320-330 (SRSRSRSRSRS) has biased composition (basic residues). The tract at residues 368–452 (DPPVILLRGE…DWSLGHLDDL (85 aa)) is DNA-binding domain.

This sequence belongs to the papillomaviridae E2 protein family. As to quaternary structure, binds DNA as homodimer. Interacts with protein E1; this interaction greatly increases E1 DNA-binding activity. Interacts with protein L1; this interaction enhances E2-dependent replication and transcription activation. Interacts with protein L2; this interaction inhibits E2 transcriptional activity but not DNA replication function E2. Interacts with protein E7; this interaction inhibits E7 oncogenic activity. Interacts with host TAF1; this interaction modulates E2-dependent transcriptional regulation. Interacts with host BRD4; this interaction mediates E2 transcriptional activation function. Additionally, the interaction with host BRD4 on mitotic chromosomes mediates tethering of the viral genome. Interacts with host TOPBP1; this interaction is required for optimal viral DNA replication. Phosphorylated.

It localises to the host nucleus. Functionally, plays a role in the initiation of viral DNA replication. A dimer of E2 interacts with a dimer of E1 in order to improve specificity of E1 DNA binding activity. Once the complex recognizes and binds DNA at specific sites, the E2 dimer is removed from DNA. E2 also regulates viral transcription through binding to the E2RE response element (5'-ACCNNNNNNGGT-3') present in multiple copies in the regulatory regions of the viral genome. Activates or represses transcription depending on E2RE's position with regards to proximal promoter elements including the TATA-box. Repression occurs by sterically hindering the assembly of the transcription initiation complex. This Human papillomavirus 17 protein is Regulatory protein E2.